Consider the following 70-residue polypeptide: Brevinin-1MT1 (70 aa).

The first 22 residues, Met-1 to Cys-22, serve as a signal peptide directing secretion. Positions Glu-23–Glu-44 are excised as a propeptide. A disulfide bond links Cys-64 and Cys-70.

The protein belongs to the frog skin active peptide (FSAP) family. Brevinin subfamily. Expressed by the skin glands.

It is found in the secreted. Functionally, antimicrobial peptide with activity against a variety of Gram-negative and Gram-positive bacteria and against fungi. Shows strong hemolytic activity against human erythrocytes. The polypeptide is Brevinin-1MT1 (Amolops mantzorum (Sichuan torrent frog)).